Reading from the N-terminus, the 295-residue chain is Enolase-phosphatase E1 (295 aa).

Aspartate 20 and glutamate 22 together coordinate Mg(2+). Substrate is bound by residues 153–154 and lysine 187; that span reads SS. Mg(2+) is bound at residue aspartate 212. Residues 260–295 form a disordered region; it reads ETKEENGGATNGKRKIEETNDDVAEEDKAQVYPNKK.

It belongs to the HAD-like hydrolase superfamily. MasA/MtnC family. As to quaternary structure, monomer. The cofactor is Mg(2+).

The protein localises to the cytoplasm. It is found in the nucleus. The enzyme catalyses 5-methylsulfanyl-2,3-dioxopentyl phosphate + H2O = 1,2-dihydroxy-5-(methylsulfanyl)pent-1-en-3-one + phosphate. The protein operates within amino-acid biosynthesis; L-methionine biosynthesis via salvage pathway; L-methionine from S-methyl-5-thio-alpha-D-ribose 1-phosphate: step 3/6. Its pathway is amino-acid biosynthesis; L-methionine biosynthesis via salvage pathway; L-methionine from S-methyl-5-thio-alpha-D-ribose 1-phosphate: step 4/6. In terms of biological role, bifunctional enzyme that catalyzes the enolization of 2,3-diketo-5-methylthiopentyl-1-phosphate (DK-MTP-1-P) into the intermediate 2-hydroxy-3-keto-5-methylthiopentenyl-1-phosphate (HK-MTPenyl-1-P), which is then dephosphorylated to form the acireductone 1,2-dihydroxy-3-keto-5-methylthiopentene (DHK-MTPene). The sequence is that of Enolase-phosphatase E1 from Anopheles gambiae (African malaria mosquito).